The sequence spans 276 residues: Large ribosomal subunit protein uL2 (276 aa).

The segment at 224–276 (AMNPVDHPLGGGEGKSSGGRHPVTPWGKPTKGYKTRNKKKPSSKLIVKRRGQK) is disordered. Residues 254 to 276 (KGYKTRNKKKPSSKLIVKRRGQK) show a composition bias toward basic residues.

It belongs to the universal ribosomal protein uL2 family. Part of the 50S ribosomal subunit. Forms a bridge to the 30S subunit in the 70S ribosome.

In terms of biological role, one of the primary rRNA binding proteins. Required for association of the 30S and 50S subunits to form the 70S ribosome, for tRNA binding and peptide bond formation. It has been suggested to have peptidyltransferase activity; this is somewhat controversial. Makes several contacts with the 16S rRNA in the 70S ribosome. The polypeptide is Large ribosomal subunit protein uL2 (Solidesulfovibrio magneticus (strain ATCC 700980 / DSM 13731 / RS-1) (Desulfovibrio magneticus)).